Reading from the N-terminus, the 236-residue chain is MGQKINPIGLRLGINRTWDSRWYANTGEYGKLLHEDVKIREFLTEELKQAAISKIVIERPHKKCRVTIHSARPGIIIGKKGADIEKLRKKLSEMTNADTSLNIVEVRKPEVDATLIAQTIAQQLERRVAFRRAMKRAVQSAMRLGAEGIRINCSGRLGGAEIARMEWYREGRVPLHTLRADIDYGTAEAKTAYGICGVKVWVFKGEILEHDPMASERRAVEGDNQGSSSNRRRENA.

The KH type-2 domain occupies 39-107 (IREFLTEELK…DTSLNIVEVR (69 aa)). The tract at residues 214-236 (ASERRAVEGDNQGSSSNRRRENA) is disordered.

Belongs to the universal ribosomal protein uS3 family. As to quaternary structure, part of the 30S ribosomal subunit. Forms a tight complex with proteins S10 and S14.

Binds the lower part of the 30S subunit head. Binds mRNA in the 70S ribosome, positioning it for translation. In Brucella suis (strain ATCC 23445 / NCTC 10510), this protein is Small ribosomal subunit protein uS3.